The sequence spans 312 residues: uncharacterized protein (312 aa).

It is found in the mitochondrion. This is an uncharacterized protein from Schizosaccharomyces pombe (strain 972 / ATCC 24843) (Fission yeast).